The following is a 198-amino-acid chain: TM2 domain-containing protein 2 (198 aa).

Positions 1-27 are cleaved as a signal peptide; it reads MRWPVPPVGYLLLGGQGLLLTFSLISS. Residues 28–128 are Extracellular-facing; the sequence is QNQTSPVTYP…FLRGNKPCIK (101 aa). Asn-29, Asn-40, and Asn-76 each carry an N-linked (GlcNAc...) asparagine glycan. A helical transmembrane segment spans residues 129-149; it reads YTGHYFITTLLYSFFLGCFGV. The 49-residue stretch at 131–179 folds into the TM2 domain; the sequence is GHYFITTLLYSFFLGCFGVDRFCLGHTGTAVGKLLTLGGLGIWWFVDLI. The Cytoplasmic segment spans residues 150-166; that stretch reads DRFCLGHTGTAVGKLLT. The chain crosses the membrane as a helical span at residues 167-187; it reads LGGLGIWWFVDLILLITGGLM. Topologically, residues 188 to 198 are extracellular; sequence PSDNSNWCTIY.

The protein belongs to the TM2 family.

The protein resides in the membrane. The chain is TM2 domain-containing protein 2 (tm2d2) from Xenopus tropicalis (Western clawed frog).